We begin with the raw amino-acid sequence, 302 residues long: tRNA-cytidine(32) 2-sulfurtransferase (302 aa).

Residues 44-49 (SGGKDS) carry the PP-loop motif motif. The [4Fe-4S] cluster site is built by cysteine 119, cysteine 122, and cysteine 210.

The protein belongs to the TtcA family. As to quaternary structure, homodimer. It depends on Mg(2+) as a cofactor. Requires [4Fe-4S] cluster as cofactor.

It localises to the cytoplasm. It carries out the reaction cytidine(32) in tRNA + S-sulfanyl-L-cysteinyl-[cysteine desulfurase] + AH2 + ATP = 2-thiocytidine(32) in tRNA + L-cysteinyl-[cysteine desulfurase] + A + AMP + diphosphate + H(+). The protein operates within tRNA modification. Functionally, catalyzes the ATP-dependent 2-thiolation of cytidine in position 32 of tRNA, to form 2-thiocytidine (s(2)C32). The sulfur atoms are provided by the cysteine/cysteine desulfurase (IscS) system. The protein is tRNA-cytidine(32) 2-sulfurtransferase of Teredinibacter turnerae (strain ATCC 39867 / T7901).